The following is a 541-amino-acid chain: Arginine--tRNA ligase (541 aa).

The 'HIGH' region motif lies at 119 to 129 (ANPTGPLHIGH).

This sequence belongs to the class-I aminoacyl-tRNA synthetase family. Monomer.

The protein localises to the cytoplasm. The enzyme catalyses tRNA(Arg) + L-arginine + ATP = L-arginyl-tRNA(Arg) + AMP + diphosphate. This Helicobacter acinonychis (strain Sheeba) protein is Arginine--tRNA ligase.